Here is a 141-residue protein sequence, read N- to C-terminus: Galactose-6-phosphate isomerase subunit LacA (141 aa).

It belongs to the LacAB/RpiB family. Heteromultimeric protein consisting of LacA and LacB.

It carries out the reaction aldehydo-D-galactose 6-phosphate = keto-D-tagatose 6-phosphate. It participates in carbohydrate metabolism; D-galactose 6-phosphate degradation; D-tagatose 6-phosphate from D-galactose 6-phosphate: step 1/1. The polypeptide is Galactose-6-phosphate isomerase subunit LacA (Streptococcus equi subsp. zooepidemicus (strain MGCS10565)).